The sequence spans 106 residues: uncharacterized protein (106 aa).

The protein to the N-terminal of E.carotovora exoenzyme regulation regulon ORF1. The C-terminal part is colinear with YqcB. To E.coli YqcC.

This is an uncharacterized protein from Haemophilus influenzae (strain ATCC 51907 / DSM 11121 / KW20 / Rd).